A 504-amino-acid polypeptide reads, in one-letter code: AMP phosphorylase 1 (504 aa).

AMP-binding positions include Gly169, 195 to 200, and Thr204; that span reads SRAITS. Asp257 functions as the Proton donor in the catalytic mechanism. 2 residues coordinate AMP: Ser265 and Lys289.

The protein belongs to the thymidine/pyrimidine-nucleoside phosphorylase family. Type 2 subfamily.

It catalyses the reaction AMP + phosphate = alpha-D-ribose 1,5-bisphosphate + adenine. It carries out the reaction CMP + phosphate = cytosine + alpha-D-ribose 1,5-bisphosphate. The catalysed reaction is UMP + phosphate = alpha-D-ribose 1,5-bisphosphate + uracil. In terms of biological role, catalyzes the conversion of AMP and phosphate to adenine and ribose 1,5-bisphosphate (R15P). Exhibits phosphorylase activity toward CMP and UMP in addition to AMP. Functions in an archaeal AMP degradation pathway, together with R15P isomerase and RubisCO. The polypeptide is AMP phosphorylase 1 (Archaeoglobus fulgidus (strain ATCC 49558 / DSM 4304 / JCM 9628 / NBRC 100126 / VC-16)).